The sequence spans 697 residues: Elongation factor G (697 aa).

The 275-residue stretch at 8 to 282 (ENTRNIGIMA…AIVDYMPSPV (275 aa)) folds into the tr-type G domain. Residues 17–24 (AHIDAGKT), 81–85 (DTPGH), and 135–138 (NKMD) contribute to the GTP site.

The protein belongs to the TRAFAC class translation factor GTPase superfamily. Classic translation factor GTPase family. EF-G/EF-2 subfamily.

Its subcellular location is the cytoplasm. Its function is as follows. Catalyzes the GTP-dependent ribosomal translocation step during translation elongation. During this step, the ribosome changes from the pre-translocational (PRE) to the post-translocational (POST) state as the newly formed A-site-bound peptidyl-tRNA and P-site-bound deacylated tRNA move to the P and E sites, respectively. Catalyzes the coordinated movement of the two tRNA molecules, the mRNA and conformational changes in the ribosome. This Acetivibrio thermocellus (strain ATCC 27405 / DSM 1237 / JCM 9322 / NBRC 103400 / NCIMB 10682 / NRRL B-4536 / VPI 7372) (Clostridium thermocellum) protein is Elongation factor G.